The primary structure comprises 799 residues: Sodium- and chloride-dependent glycine transporter 2 (799 aa).

Positions 1 to 64 (MDCSAPKEMN…RSASTGAQTF (64 aa)) are disordered. At 1-201 (MDCSAPKEMN…ARGNWSSKLD (201 aa)) the chain is on the cytoplasmic side. The span at 40–57 (PAAAPAAAVQPPRVPRSA) shows a compositional bias: low complexity. Residue serine 58 is modified to Phosphoserine. Threonine 59 carries the post-translational modification Phosphothreonine. At serine 86 the chain carries Phosphoserine. 3 helical membrane-spanning segments follow: residues 202 to 222 (FILS…FPYL), 230 to 249 (AFLI…IFFL), and 273 to 293 (GCGI…NVII). Residues glycine 208, alanine 210, valine 211, and asparagine 215 each coordinate Na(+). Residues 294–395 (CYTLFYLFAS…AGIEYPGEIR (102 aa)) are Extracellular-facing. A disulfide bridge connects residues cysteine 313 and cysteine 322. 4 N-linked (GlcNAc...) asparagine glycosylation sites follow: asparagine 345, asparagine 355, asparagine 360, and asparagine 366. Transmembrane regions (helical) follow at residues 396 to 414 (WPLA…ASLA), 423 to 440 (VVYF…ILLI), 476 to 493 (IFFS…LSSY), 505 to 526 (LIVT…FSVI), and 559 to 578 (LPLS…TLGL). Na(+)-binding residues include serine 479, asparagine 511, leucine 576, and aspartate 579. 4 helical membrane passes run 606-624 (VFTL…PMIT), 640-660 (SYAL…VYGL), 681-700 (VCWA…FSFY), and 719-737 (LGWL…MFVI). The Cytoplasmic portion of the chain corresponds to 738-799 (KMYLAPGRFI…VKDLELGTQC (62 aa)).

This sequence belongs to the sodium:neurotransmitter symporter (SNF) (TC 2.A.22) family. SLC6A5 subfamily. Post-translationally, N-glycosylated. In terms of tissue distribution, specifically expressed in spinal cord, brain stem, and to a lesser extent in the cerebellum.

The protein localises to the cell membrane. It catalyses the reaction glycine(out) + chloride(out) + 3 Na(+)(out) = glycine(in) + chloride(in) + 3 Na(+)(in). In terms of biological role, sodium- and chloride-dependent glycine transporter. Terminates the action of glycine by its high affinity sodium-dependent reuptake into presynaptic terminals. May be responsible for the termination of neurotransmission at strychnine-sensitive glycinergic synapses. In Rattus norvegicus (Rat), this protein is Sodium- and chloride-dependent glycine transporter 2 (Slc6a5).